We begin with the raw amino-acid sequence, 288 residues long: Phosphatidylserine decarboxylase proenzyme (288 aa).

Residues Asp-92, His-149, and Ser-254 each act as charge relay system; for autoendoproteolytic cleavage activity in the active site. Residue Ser-254 is the Schiff-base intermediate with substrate; via pyruvic acid; for decarboxylase activity of the active site. Residue Ser-254 is modified to Pyruvic acid (Ser); by autocatalysis.

It belongs to the phosphatidylserine decarboxylase family. PSD-B subfamily. Prokaryotic type I sub-subfamily. In terms of assembly, heterodimer of a large membrane-associated beta subunit and a small pyruvoyl-containing alpha subunit. The cofactor is pyruvate. In terms of processing, is synthesized initially as an inactive proenzyme. Formation of the active enzyme involves a self-maturation process in which the active site pyruvoyl group is generated from an internal serine residue via an autocatalytic post-translational modification. Two non-identical subunits are generated from the proenzyme in this reaction, and the pyruvate is formed at the N-terminus of the alpha chain, which is derived from the carboxyl end of the proenzyme. The autoendoproteolytic cleavage occurs by a canonical serine protease mechanism, in which the side chain hydroxyl group of the serine supplies its oxygen atom to form the C-terminus of the beta chain, while the remainder of the serine residue undergoes an oxidative deamination to produce ammonia and the pyruvoyl prosthetic group on the alpha chain. During this reaction, the Ser that is part of the protease active site of the proenzyme becomes the pyruvoyl prosthetic group, which constitutes an essential element of the active site of the mature decarboxylase.

The protein localises to the cell membrane. It catalyses the reaction a 1,2-diacyl-sn-glycero-3-phospho-L-serine + H(+) = a 1,2-diacyl-sn-glycero-3-phosphoethanolamine + CO2. Its pathway is phospholipid metabolism; phosphatidylethanolamine biosynthesis; phosphatidylethanolamine from CDP-diacylglycerol: step 2/2. Functionally, catalyzes the formation of phosphatidylethanolamine (PtdEtn) from phosphatidylserine (PtdSer). This chain is Phosphatidylserine decarboxylase proenzyme, found in Bordetella petrii (strain ATCC BAA-461 / DSM 12804 / CCUG 43448).